The sequence spans 350 residues: Probable aldo-keto reductase 1 (350 aa).

Residue tyrosine 67 is the Proton donor of the active site. Histidine 135 contributes to the substrate binding site. 214–224 (SPLGKGFFSSG) lines the NADP(+) pocket.

This sequence belongs to the aldo/keto reductase family.

This chain is Probable aldo-keto reductase 1, found in Oryza sativa subsp. indica (Rice).